We begin with the raw amino-acid sequence, 257 residues long: Low affinity immunoglobulin gamma Fc region receptor III-A (257 aa).

Residues 1–19 form the signal peptide; that stretch reads MWQLLSPTALLLLVSVPGT. At 20-209 the chain is on the extracellular side; the sequence is HAEDPPKSVV…ILSFFLPWHQ (190 aa). Ig-like C2-type domains are found at residues 25–104 and 108–190; these read PKSV…LRLE and GWLL…VKVT. 2 disulfides stabilise this stretch: Cys-48-Cys-90 and Cys-129-Cys-173. N-linked (GlcNAc...) asparagine glycans are attached at residues Asn-64, Asn-134, and Asn-162. A glycan (N-linked (GlcNAc...) asparagine; in variant N-181) is linked at Asp-181. A helical transmembrane segment spans residues 210–230; the sequence is IIFCLVMGFLFAVDTGLYFSV. The Cytoplasmic portion of the chain corresponds to 231 to 257; sequence RKVLRSSKEDWRNGKVTWSRDPADKGG.

As to quaternary structure, forms a heterooligomeric complex with ITAM-containing signaling subunits FCER1G. Interacts (via transmembrane domain) with signaling subunits; this interaction is a prerequisite for receptor complex expression on the cell surface and intracellular signal transduction. Binds the Fc region of antigen-complexed IgG. In terms of tissue distribution, expressed in polymorphonuclear leukocytes, pulmonary alveolar macrophages and peripheral blood mononuclear cells (at protein level). Found in spleen, and at very low levels in lymph nodes but not in thymus or liver.

The protein resides in the cell membrane. Receptor for the invariable Fc fragment of immunoglobulin gamma (IgG). Optimally activated upon binding of clustered antigen-IgG complexes displayed on cell surfaces, triggers lysis of antibody-coated cells, a process known as antibody-dependent cellular cytotoxicity (ADCC). Does not bind free monomeric IgG, thus avoiding inappropriate effector cell activation in the absence of antigenic trigger. Mediates IgG effector functions on natural killer (NK) cells. Binds antigen-IgG complexes generated upon infection and triggers NK cell-dependent cytokine production and degranulation to limit viral load and propagation. Fc-binding subunit that associates with FCER1G adapter to form functional signaling complexes. Following the engagement of antigen-IgG complexes, triggers phosphorylation of immunoreceptor tyrosine-based activation motif (ITAM)-containing adapter with subsequent activation of phosphatidylinositol 3-kinase signaling and sustained elevation of intracellular calcium that ultimately drive NK cell activation. Mediates enhanced ADCC in response to afucosylated IgGs. In Sus scrofa (Pig), this protein is Low affinity immunoglobulin gamma Fc region receptor III-A.